A 304-amino-acid chain; its full sequence is N-acetylglucosaminyl-phosphatidylinositol de-N-acetylase (304 aa).

The Lumenal portion of the chain corresponds to 1–20; the sequence is MKMLRRTKVNFSKLLYKITK. A helical transmembrane segment spans residues 21–38; that stretch reads LAIVLTILYIYFTPKIVS. Topologically, residues 39-304 are cytoplasmic; the sequence is RNNASLQHIF…FVNEFDVYTY (266 aa).

This sequence belongs to the PIGL family.

The protein resides in the endoplasmic reticulum membrane. The catalysed reaction is a 6-(N-acetyl-alpha-D-glucosaminyl)-1-(1,2-diacyl-sn-glycero-3-phospho)-1D-myo-inositol + H2O = a 6-(alpha-D-glucosaminyl)-1-(1,2-diacyl-sn-glycero-3-phospho)-1D-myo-inositol + acetate. It participates in glycolipid biosynthesis; glycosylphosphatidylinositol-anchor biosynthesis. Its function is as follows. Involved in the second step of GPI biosynthesis. De-N-acetylation of N-acetylglucosaminyl-phosphatidylinositol. The polypeptide is N-acetylglucosaminyl-phosphatidylinositol de-N-acetylase (GPI12) (Saccharomyces cerevisiae (strain ATCC 204508 / S288c) (Baker's yeast)).